The chain runs to 496 residues: Probable malate:quinone oxidoreductase (496 aa).

It belongs to the MQO family. It depends on FAD as a cofactor.

It carries out the reaction (S)-malate + a quinone = a quinol + oxaloacetate. The protein operates within carbohydrate metabolism; tricarboxylic acid cycle; oxaloacetate from (S)-malate (quinone route): step 1/1. The chain is Probable malate:quinone oxidoreductase from Flavobacterium psychrophilum (strain ATCC 49511 / DSM 21280 / CIP 103535 / JIP02/86).